Consider the following 120-residue polypeptide: MKTIIFKDFQFEAAHYLPYVPKMHKCRRLHGHSFFVRLELKDKINEKNGWIIDYAEIKLAFQPIYDQLDHHFLNDIPGLENPTSEILAKWIWHRLKPKLSILNTIIIKETCTSGCIYQGF.

His15 contributes to the Zn(2+) binding site. The active-site Proton acceptor is Cys26. 2 residues coordinate Zn(2+): His30 and His32. Residues His70 and Glu109 each act as charge relay system in the active site.

The protein belongs to the PTPS family. QueD subfamily. Zn(2+) is required as a cofactor.

The catalysed reaction is 7,8-dihydroneopterin 3'-triphosphate + H2O = 6-carboxy-5,6,7,8-tetrahydropterin + triphosphate + acetaldehyde + 2 H(+). Its pathway is purine metabolism; 7-cyano-7-deazaguanine biosynthesis. Its function is as follows. Catalyzes the conversion of 7,8-dihydroneopterin triphosphate (H2NTP) to 6-carboxy-5,6,7,8-tetrahydropterin (CPH4) and acetaldehyde. The protein is 6-carboxy-5,6,7,8-tetrahydropterin synthase (queD) of Buchnera aphidicola subsp. Schizaphis graminum (strain Sg).